Reading from the N-terminus, the 371-residue chain is UDP-N-acetylglucosamine--N-acetylmuramyl-(pentapeptide) pyrophosphoryl-undecaprenol N-acetylglucosamine transferase (371 aa).

UDP-N-acetyl-alpha-D-glucosamine-binding positions include 15-17, Asn126, Arg169, Ser197, and Gln298; that span reads TGG.

Belongs to the glycosyltransferase 28 family. MurG subfamily.

Its subcellular location is the cell inner membrane. The catalysed reaction is di-trans,octa-cis-undecaprenyl diphospho-N-acetyl-alpha-D-muramoyl-L-alanyl-D-glutamyl-meso-2,6-diaminopimeloyl-D-alanyl-D-alanine + UDP-N-acetyl-alpha-D-glucosamine = di-trans,octa-cis-undecaprenyl diphospho-[N-acetyl-alpha-D-glucosaminyl-(1-&gt;4)]-N-acetyl-alpha-D-muramoyl-L-alanyl-D-glutamyl-meso-2,6-diaminopimeloyl-D-alanyl-D-alanine + UDP + H(+). The protein operates within cell wall biogenesis; peptidoglycan biosynthesis. Functionally, cell wall formation. Catalyzes the transfer of a GlcNAc subunit on undecaprenyl-pyrophosphoryl-MurNAc-pentapeptide (lipid intermediate I) to form undecaprenyl-pyrophosphoryl-MurNAc-(pentapeptide)GlcNAc (lipid intermediate II). This chain is UDP-N-acetylglucosamine--N-acetylmuramyl-(pentapeptide) pyrophosphoryl-undecaprenol N-acetylglucosamine transferase, found in Paramagnetospirillum magneticum (strain ATCC 700264 / AMB-1) (Magnetospirillum magneticum).